The chain runs to 499 residues: Cysteine--tRNA ligase (499 aa).

Residue Cys-29 coordinates Zn(2+). The 'HIGH' region motif lies at 31-41 (VTVYDLCHLGH). Positions 213, 238, and 242 each coordinate Zn(2+). Residues 270 to 274 (KMSKS) carry the 'KMSKS' region motif. Lys-273 contacts ATP.

The protein belongs to the class-I aminoacyl-tRNA synthetase family. As to quaternary structure, monomer. It depends on Zn(2+) as a cofactor.

The protein resides in the cytoplasm. The enzyme catalyses tRNA(Cys) + L-cysteine + ATP = L-cysteinyl-tRNA(Cys) + AMP + diphosphate. This chain is Cysteine--tRNA ligase, found in Synechococcus sp. (strain CC9902).